Consider the following 64-residue polypeptide: Large ribosomal subunit protein bL33c (64 aa).

This sequence belongs to the bacterial ribosomal protein bL33 family.

Its subcellular location is the plastid. The protein localises to the chloroplast. This is Large ribosomal subunit protein bL33c from Huperzia lucidula (Shining clubmoss).